We begin with the raw amino-acid sequence, 461 residues long: tRNA modification GTPase MnmE (461 aa).

(6S)-5-formyl-5,6,7,8-tetrahydrofolate is bound by residues lysine 32, glutamate 89, and lysine 128. The TrmE-type G domain maps to 224–387 (GHALSIVGKP…LSQKISEFFP (164 aa)). Asparagine 234 serves as a coordination point for K(+). GTP contacts are provided by residues 234–239 (NAGKSS), 253–259 (SDIKGTT), and 278–281 (DTAG). Serine 238 provides a ligand contact to Mg(2+). Residues serine 253, isoleucine 255, and threonine 258 each contribute to the K(+) site. Position 259 (threonine 259) interacts with Mg(2+). Lysine 461 contributes to the (6S)-5-formyl-5,6,7,8-tetrahydrofolate binding site.

This sequence belongs to the TRAFAC class TrmE-Era-EngA-EngB-Septin-like GTPase superfamily. TrmE GTPase family. As to quaternary structure, homodimer. Heterotetramer of two MnmE and two MnmG subunits. It depends on K(+) as a cofactor.

The protein localises to the cytoplasm. Functionally, exhibits a very high intrinsic GTPase hydrolysis rate. Involved in the addition of a carboxymethylaminomethyl (cmnm) group at the wobble position (U34) of certain tRNAs, forming tRNA-cmnm(5)s(2)U34. In Helicobacter pylori (strain J99 / ATCC 700824) (Campylobacter pylori J99), this protein is tRNA modification GTPase MnmE.